We begin with the raw amino-acid sequence, 143 residues long: Gastrin-releasing peptide (143 aa).

The first 23 residues, 1–23 (MRGPELRLVLLALVLCQAPLGPA), serve as a signal peptide directing secretion. Met-50 is modified (methionine amide). Residues 54–143 (STGESRHVLE…GLKAKEGALS (90 aa)) constitute a propeptide that is removed on maturation. A disordered region spans residues 91-115 (KGNSSHRSPQLKPLSTHQPTLDTED). Over residues 92–111 (GNSSHRSPQLKPLSTHQPTL) the composition is skewed to polar residues.

It belongs to the bombesin/neuromedin-B/ranatensin family.

It localises to the secreted. The protein localises to the cytoplasmic vesicle. It is found in the secretory vesicle lumen. Its subcellular location is the cell projection. The protein resides in the neuron projection. Functionally, stimulates the release of gastrin and other gastrointestinal hormones. Contributes to the perception of prurient stimuli and to the transmission of itch signals in the spinal cord that promote scratching behavior. Contributes primarily to nonhistaminergic itch sensation. In one study, shown to act in the amygdala as part of an inhibitory network which inhibits memory specifically related to learned fear. In another study, shown to act on vasoactive intestinal peptide (VIP)-expressing cells in the auditory cortex, most likely via extrasynaptic diffusion from local and long-range sources, to mediate disinhibition of glutamatergic cells via VIP cell-specific GRPR signaling which leads to enhanced auditory fear memories. Contributes to the regulation of food intake. Inhibits voltage-gated sodium channels but enhances voltage-gated potassium channels in hippocampal neurons. Induces sighing by acting directly on the pre-Botzinger complex, a cluster of several thousand neurons in the ventrolateral medulla responsible for inspiration during respiratory activity. Induces an itch response through activation of receptors present on mast cells, triggering mast cell degranulation. This Cavia porcellus (Guinea pig) protein is Gastrin-releasing peptide (GRP).